The chain runs to 396 residues: Ribosomal RNA large subunit methyltransferase G (396 aa).

Belongs to the methyltransferase superfamily. RlmG family.

It is found in the cytoplasm. The enzyme catalyses guanosine(1835) in 23S rRNA + S-adenosyl-L-methionine = N(2)-methylguanosine(1835) in 23S rRNA + S-adenosyl-L-homocysteine + H(+). Functionally, specifically methylates the guanine in position 1835 (m2G1835) of 23S rRNA. This Yersinia enterocolitica serotype O:8 / biotype 1B (strain NCTC 13174 / 8081) protein is Ribosomal RNA large subunit methyltransferase G.